Consider the following 258-residue polypeptide: UPF0246 protein plu0566 (258 aa).

The protein belongs to the UPF0246 family.

In Photorhabdus laumondii subsp. laumondii (strain DSM 15139 / CIP 105565 / TT01) (Photorhabdus luminescens subsp. laumondii), this protein is UPF0246 protein plu0566.